We begin with the raw amino-acid sequence, 218 residues long: Large ribosomal subunit protein uL3 (218 aa).

It belongs to the universal ribosomal protein uL3 family. In terms of assembly, part of the 50S ribosomal subunit. Forms a cluster with proteins L14 and L19.

Its function is as follows. One of the primary rRNA binding proteins, it binds directly near the 3'-end of the 23S rRNA, where it nucleates assembly of the 50S subunit. This Corynebacterium aurimucosum (strain ATCC 700975 / DSM 44827 / CIP 107346 / CN-1) (Corynebacterium nigricans) protein is Large ribosomal subunit protein uL3.